The sequence spans 430 residues: Enolase (430 aa).

Q163 serves as a coordination point for (2R)-2-phosphoglycerate. The active-site Proton donor is E205. Positions 242, 288, and 315 each coordinate Mg(2+). The (2R)-2-phosphoglycerate site is built by K340, R369, S370, and K391. The active-site Proton acceptor is K340.

The protein belongs to the enolase family. The cofactor is Mg(2+).

It localises to the cytoplasm. The protein localises to the secreted. It is found in the cell surface. The catalysed reaction is (2R)-2-phosphoglycerate = phosphoenolpyruvate + H2O. It functions in the pathway carbohydrate degradation; glycolysis; pyruvate from D-glyceraldehyde 3-phosphate: step 4/5. In terms of biological role, catalyzes the reversible conversion of 2-phosphoglycerate (2-PG) into phosphoenolpyruvate (PEP). It is essential for the degradation of carbohydrates via glycolysis. This is Enolase from Acidobacterium capsulatum (strain ATCC 51196 / DSM 11244 / BCRC 80197 / JCM 7670 / NBRC 15755 / NCIMB 13165 / 161).